The following is a 313-amino-acid chain: MMKGAKFSSLLVLFFIFPIAFAQLRVGFYSQSCPQAETIVRNLVRQRFGVTPTVTAALLRMHFHDCFVKGCDASLLIDSTNSEKTAGPNGSVREFDLIDRIKAQLEAACPSTVSCADIVTLATRDSVALAGGPSYSIPTGRRDGRVSNNLDVTLPGPTISVSGAVSLFTNKGMNTFDAVALLGAHTVGQGNCGLFSDRITSFQGTGRPDPSMDPALVTSLRNTCRNSATAALDQSSPLRFDNQFFKQIRKRRGVLQVDQRLASDPQTRGIVARYANNNAFFKRQFVRAMVKMGAVDVLTGRNGEIRRNCRRFN.

The N-terminal stretch at 1–22 (MMKGAKFSSLLVLFFIFPIAFA) is a signal peptide. Cystine bridges form between Cys33–Cys109, Cys66–Cys71, Cys115–Cys309, and Cys192–Cys224. The active-site Proton acceptor is His64. Asp65, Val68, Gly70, Asp72, and Ser74 together coordinate Ca(2+). Residue Pro155 coordinates substrate. His185 lines the heme b pocket. Thr186 lines the Ca(2+) pocket. Asp233, Ser236, and Asp241 together coordinate Ca(2+).

It belongs to the peroxidase family. Classical plant (class III) peroxidase subfamily. Requires heme b as cofactor. The cofactor is Ca(2+). In terms of tissue distribution, mainly expressed in roots.

The protein localises to the secreted. The enzyme catalyses 2 a phenolic donor + H2O2 = 2 a phenolic radical donor + 2 H2O. Its function is as follows. Removal of H(2)O(2), oxidation of toxic reductants, biosynthesis and degradation of lignin, suberization, auxin catabolism, response to environmental stresses such as wounding, pathogen attack and oxidative stress. These functions might be dependent on each isozyme/isoform in each plant tissue. This Arabidopsis thaliana (Mouse-ear cress) protein is Peroxidase 57 (PER57).